A 535-amino-acid chain; its full sequence is Flavonoid 3'-monooxygenase CYP75B4 (535 aa).

The helical transmembrane segment at 8–28 (ISTSLLLTTVALSVIVCYALV) threads the bilayer. Cysteine 469 lines the heme pocket.

Belongs to the cytochrome P450 family. Heme serves as cofactor.

The protein resides in the membrane. The enzyme catalyses a 3'-unsubstituted flavone + reduced [NADPH--hemoprotein reductase] + O2 = a 3'-hydroxyflavone + oxidized [NADPH--hemoprotein reductase] + H2O + H(+). Its pathway is secondary metabolite biosynthesis; flavonoid biosynthesis. Catalyzes the 3'-hydroxylation of the flavonoid B-ring to the 3',4'-hydroxylated state. Catalyzes in vitro 3'-hydroxylation of different flavonoids. Catalyzes the conversion of apigenin to luteolin, naringenin to eriodictyol, and kaempferol to quercetin. Possesses specific 5'-hydroxylase activity toward chrysoeriol (a 3'-methoxylated flavone) and is indispensable for tricin formation. Converts chrysoeriol to selgin, a precursor of tricin, suggesting that chrysoeriol, instead of tricetin, is an intermediate in tricin biosynthesis. The protein is Flavonoid 3'-monooxygenase CYP75B4 of Oryza sativa subsp. japonica (Rice).